The chain runs to 262 residues: Type III pantothenate kinase (262 aa).

Position 5-12 (5-12 (DAGNTRSK)) interacts with ATP. Substrate contacts are provided by residues Tyr-102 and 110–113 (GSDR). Asp-112 serves as the catalytic Proton acceptor. Asp-132 contributes to the K(+) binding site. ATP is bound at residue Thr-135. Thr-190 contacts substrate.

The protein belongs to the type III pantothenate kinase family. As to quaternary structure, homodimer. It depends on NH4(+) as a cofactor. K(+) is required as a cofactor.

Its subcellular location is the cytoplasm. The enzyme catalyses (R)-pantothenate + ATP = (R)-4'-phosphopantothenate + ADP + H(+). The protein operates within cofactor biosynthesis; coenzyme A biosynthesis; CoA from (R)-pantothenate: step 1/5. Functionally, catalyzes the phosphorylation of pantothenate (Pan), the first step in CoA biosynthesis. The protein is Type III pantothenate kinase of Idiomarina loihiensis (strain ATCC BAA-735 / DSM 15497 / L2-TR).